Reading from the N-terminus, the 447-residue chain is Cytochrome P450 BJ-4 (447 aa).

C392 provides a ligand contact to heme.

This sequence belongs to the cytochrome P450 family. Requires heme as cofactor.

Its function is as follows. Cytochromes P450 are a group of heme-thiolate monooxygenases. They oxidize a variety of structurally unrelated compounds, including steroids, fatty acids, and xenobiotics. In Bradyrhizobium diazoefficiens (strain JCM 10833 / BCRC 13528 / IAM 13628 / NBRC 14792 / USDA 110), this protein is Cytochrome P450 BJ-4 (cyp117).